The chain runs to 407 residues: RING-H2 finger protein ATL43 (407 aa).

The first 22 residues, 1-22, serve as a signal peptide directing secretion; that stretch reads MSSSSLILLFSTLSLFLNVSLA. A helical transmembrane segment spans residues 57–77; that stretch reads GIAVVIAVLTAFFSLTFLLLL. Residues 146–188 form an RING-type; atypical zinc finger; sequence CAVCLARFEPTEVLRLLPKCKHAFHVECVDTWLDAHSTCPLCR.

Belongs to the RING-type zinc finger family. ATL subfamily.

Its subcellular location is the membrane. The enzyme catalyses S-ubiquitinyl-[E2 ubiquitin-conjugating enzyme]-L-cysteine + [acceptor protein]-L-lysine = [E2 ubiquitin-conjugating enzyme]-L-cysteine + N(6)-ubiquitinyl-[acceptor protein]-L-lysine.. The protein operates within protein modification; protein ubiquitination. The polypeptide is RING-H2 finger protein ATL43 (ATL43) (Arabidopsis thaliana (Mouse-ear cress)).